We begin with the raw amino-acid sequence, 390 residues long: MPVLRDRIPRRGFFLGLALLAALSGCSSTDTFEQPVPVPEIEASVEFERVWSMSVGDGHDGDFLYLAPLVTGDLIYAASADGELYAVATETGEVAWESEFEDRIFSGLGGDGQNLYLTTENADLVALSREDGSEVWRTSLPTEVLSSPQSNGSLVVAQTTDGKVLGFSATDGEKLWQYDGSVPVLSMRAAAAPLVGGDVVIASFASGKLIALTAASGQPMWQYEVGQPQGRTELERLVDVTGQPLVIETAVMVVGYQGKLALVDIRTGQEIWSRKASSLYSPMIGGGQIYLAAADGEIIALRGSDRREVWTQDRLAWRQLTQPMVYEDYLVVGDFEGYLHALDREDGSLVGQREFDDEGIRVPAQRLANGNLLVFGNSGKMAVFQVKPQD.

Residues 1–25 form the signal peptide; it reads MPVLRDRIPRRGFFLGLALLAALSG. C26 carries the N-palmitoyl cysteine lipid modification. C26 carries the S-diacylglycerol cysteine lipid modification.

It belongs to the BamB family. As to quaternary structure, part of the Bam complex.

It is found in the cell outer membrane. Part of the outer membrane protein assembly complex, which is involved in assembly and insertion of beta-barrel proteins into the outer membrane. The protein is Outer membrane protein assembly factor BamB of Marinobacter adhaerens (strain DSM 23420 / HP15).